A 276-amino-acid polypeptide reads, in one-letter code: Large ribosomal subunit protein uL2 (276 aa).

2 disordered regions span residues 26–45 (RSTPERSLTEGLTKKSGRNC) and 224–276 (AMNP…RGQK). Residues 259-276 (RDKKKASSKLIIKRRGQK) are compositionally biased toward basic residues.

The protein belongs to the universal ribosomal protein uL2 family. Part of the 50S ribosomal subunit. Forms a bridge to the 30S subunit in the 70S ribosome.

Its function is as follows. One of the primary rRNA binding proteins. Required for association of the 30S and 50S subunits to form the 70S ribosome, for tRNA binding and peptide bond formation. It has been suggested to have peptidyltransferase activity; this is somewhat controversial. Makes several contacts with the 16S rRNA in the 70S ribosome. The sequence is that of Large ribosomal subunit protein uL2 from Oleidesulfovibrio alaskensis (strain ATCC BAA-1058 / DSM 17464 / G20) (Desulfovibrio alaskensis).